Here is a 277-residue protein sequence, read N- to C-terminus: Diaminopimelate epimerase (277 aa).

Positions 13, 46, and 65 each coordinate substrate. Cys74 functions as the Proton donor in the catalytic mechanism. Substrate contacts are provided by residues Gly75–Asn76, Asn158, Asn191, and Glu209–Arg210. The Proton acceptor role is filled by Cys218. A substrate-binding site is contributed by Gly219 to Thr220.

This sequence belongs to the diaminopimelate epimerase family. Homodimer.

Its subcellular location is the cytoplasm. It carries out the reaction (2S,6S)-2,6-diaminopimelate = meso-2,6-diaminopimelate. It participates in amino-acid biosynthesis; L-lysine biosynthesis via DAP pathway; DL-2,6-diaminopimelate from LL-2,6-diaminopimelate: step 1/1. Catalyzes the stereoinversion of LL-2,6-diaminopimelate (L,L-DAP) to meso-diaminopimelate (meso-DAP), a precursor of L-lysine and an essential component of the bacterial peptidoglycan. The protein is Diaminopimelate epimerase of Nitrosospira multiformis (strain ATCC 25196 / NCIMB 11849 / C 71).